A 124-amino-acid polypeptide reads, in one-letter code: Fluoride-specific ion channel FluC (124 aa).

A run of 4 helical transmembrane segments spans residues 4-24 (VLYIAVFGALGCLSRYYLSGW), 32-52 (AFPYGTFAVNIVGAFCIGLIM), 67-87 (IGLTIGFLGGLTTFSTFSYET), and 101-121 (ANVLFSVMTCLVFTWLGIIVA). Residues Gly75 and Thr78 each contribute to the Na(+) site.

This sequence belongs to the fluoride channel Fluc/FEX (TC 1.A.43) family.

It is found in the cell inner membrane. It catalyses the reaction fluoride(in) = fluoride(out). With respect to regulation, na(+) is not transported, but it plays an essential structural role and its presence is essential for fluoride channel function. Functionally, fluoride-specific ion channel. Important for reducing fluoride concentration in the cell, thus reducing its toxicity. In Geotalea uraniireducens (strain Rf4) (Geobacter uraniireducens), this protein is Fluoride-specific ion channel FluC.